We begin with the raw amino-acid sequence, 110 residues long: MEYLRIAFLFALTALAEIVGCYLPWLVLRQAKSAWLLMPAALSLALFAWLLTLHPTAAGRTYAAYGGMYIAVALAWLRVVDGATLTRWDIGGAAIALAGMAVIALQPQPT.

The next 4 helical transmembrane spans lie at 8–28, 33–53, 63–83, and 90–110; these read FLFALTALAEIVGCYLPWLVL, SAWLLMPAALSLALFAWLLTL, AAYGGMYIAVALAWLRVVDGA, and IGGAAIALAGMAVIALQPQPT.

Belongs to the UPF0060 family.

Its subcellular location is the cell inner membrane. This is UPF0060 membrane protein RSp1275 from Ralstonia nicotianae (strain ATCC BAA-1114 / GMI1000) (Ralstonia solanacearum).